Reading from the N-terminus, the 62-residue chain is Photosystem II reaction center protein Z (62 aa).

Transmembrane regions (helical) follow at residues 8 to 28 (VLTALVFFSFVMVVAVPVAYA) and 41 to 61 (YVGSAIWIGLVLLVAILNFLV).

Belongs to the PsbZ family. In terms of assembly, PSII is composed of 1 copy each of membrane proteins PsbA, PsbB, PsbC, PsbD, PsbE, PsbF, PsbH, PsbI, PsbJ, PsbK, PsbL, PsbM, PsbT, PsbX, PsbY, PsbZ, Psb30/Ycf12, peripheral proteins PsbO, CyanoQ (PsbQ), PsbU, PsbV and a large number of cofactors. It forms dimeric complexes.

It is found in the cellular thylakoid membrane. Functionally, may control the interaction of photosystem II (PSII) cores with the light-harvesting antenna, regulates electron flow through the 2 photosystem reaction centers. PSII is a light-driven water plastoquinone oxidoreductase, using light energy to abstract electrons from H(2)O, generating a proton gradient subsequently used for ATP formation. This Crocosphaera subtropica (strain ATCC 51142 / BH68) (Cyanothece sp. (strain ATCC 51142)) protein is Photosystem II reaction center protein Z.